Reading from the N-terminus, the 310-residue chain is GMP synthase [glutamine-hydrolyzing] subunit B (310 aa).

A GMPS ATP-PPase domain is found at 2–185 (FDAKSFIEES…LGLPEKIAHR (184 aa)). ATP is bound at residue 29-35 (SGGVDSS).

As to quaternary structure, heterodimer composed of a glutamine amidotransferase subunit (A) and a GMP-binding subunit (B).

It carries out the reaction XMP + L-glutamine + ATP + H2O = GMP + L-glutamate + AMP + diphosphate + 2 H(+). The protein operates within purine metabolism; GMP biosynthesis; GMP from XMP (L-Gln route): step 1/1. Functionally, catalyzes the synthesis of GMP from XMP. The sequence is that of GMP synthase [glutamine-hydrolyzing] subunit B from Methanococcus vannielii (strain ATCC 35089 / DSM 1224 / JCM 13029 / OCM 148 / SB).